The primary structure comprises 390 residues: Pyruvate dehydrogenase E1 component subunit alpha, somatic form, mitochondrial (390 aa).

A mitochondrion-targeting transit peptide spans 1 to 29; it reads MRKMLAAVSRVLSGVAQKPASRVLVASRH. An N6-acetyllysine; alternate modification is found at lysine 63. Residue lysine 63 is modified to N6-succinyllysine; alternate. Pyruvate contacts are provided by histidine 92, tyrosine 118, arginine 119, alanine 157, glycine 165, valine 167, aspartate 196, glycine 197, alanine 198, asparagine 225, and tyrosine 227. Thiamine diphosphate contacts are provided by tyrosine 118 and arginine 119. Positions 165, 167, 196, 197, 198, and 225 each coordinate thiamine diphosphate. Residue aspartate 196 coordinates Mg(2+). Mg(2+) is bound by residues asparagine 225 and tyrosine 227. Serine 232 is subject to Phosphoserine; by PDK1. Lysine 244 bears the N6-acetyllysine; alternate mark. Lysine 244 carries the N6-succinyllysine; alternate modification. Lysine 267 bears the N6-acetyllysine mark. Lysine 277 is modified (N6-succinyllysine). Histidine 292 lines the thiamine diphosphate pocket. At serine 293 the chain carries Phosphoserine; by PDK1, PDK2, PDK3 and PDK4. At serine 295 the chain carries Phosphoserine. Phosphoserine; by PDK1, PDK2, PDK3 and PDK4 is present on serine 300. Tyrosine 301 carries the post-translational modification Phosphotyrosine. Lysine 313 bears the N6-acetyllysine; alternate mark. At lysine 313 the chain carries N6-succinyllysine; alternate. An N6-acetyllysine mark is found at lysine 321 and lysine 336. Position 385 is an N6-succinyllysine (lysine 385).

As to quaternary structure, heterotetramer of two PDHA1 and two PDHB subunits. The heterotetramer interacts with DLAT, and is part of the multimeric pyruvate dehydrogenase complex that contains multiple copies of pyruvate dehydrogenase (E1), dihydrolipoamide acetyltransferase (DLAT, E2) and lipoamide dehydrogenase (DLD, E3). These subunits are bound to an inner core composed of about 48 DLAT and 12 PDHX molecules. It depends on thiamine diphosphate as a cofactor. Mg(2+) serves as cofactor. Post-translationally, phosphorylation at Ser-232, Ser-293 and Ser-300 by PDK family kinases inactivates the enzyme; for this phosphorylation at a single site is sufficient. Phosphorylation at Ser-293 interferes with access to active site, and thereby inactivates the enzyme. Dephosphorylation at all three sites, i.e. at Ser-232, Ser-293 and Ser-300, is required for reactivation. In terms of processing, acetylation alters the phosphorylation pattern. Deacetylated by SIRT3.

It is found in the mitochondrion matrix. The catalysed reaction is N(6)-[(R)-lipoyl]-L-lysyl-[protein] + pyruvate + H(+) = N(6)-[(R)-S(8)-acetyldihydrolipoyl]-L-lysyl-[protein] + CO2. Its activity is regulated as follows. Pyruvate dehydrogenase activity is inhibited by phosphorylation of PDHA1; it is reactivated by dephosphorylation. The pyruvate dehydrogenase complex catalyzes the overall conversion of pyruvate to acetyl-CoA and CO(2), and thereby links the glycolytic pathway to the tricarboxylic cycle. This is Pyruvate dehydrogenase E1 component subunit alpha, somatic form, mitochondrial (PDHA1) from Bos taurus (Bovine).